Reading from the N-terminus, the 203-residue chain is uncharacterized protein (203 aa).

This is an uncharacterized protein from Aquifex aeolicus (strain VF5).